The primary structure comprises 195 residues: Imidazoleglycerol-phosphate dehydratase (195 aa).

This sequence belongs to the imidazoleglycerol-phosphate dehydratase family.

It is found in the cytoplasm. The enzyme catalyses D-erythro-1-(imidazol-4-yl)glycerol 3-phosphate = 3-(imidazol-4-yl)-2-oxopropyl phosphate + H2O. The protein operates within amino-acid biosynthesis; L-histidine biosynthesis; L-histidine from 5-phospho-alpha-D-ribose 1-diphosphate: step 6/9. The sequence is that of Imidazoleglycerol-phosphate dehydratase from Maridesulfovibrio salexigens (strain ATCC 14822 / DSM 2638 / NCIMB 8403 / VKM B-1763) (Desulfovibrio salexigens).